A 281-amino-acid chain; its full sequence is 3-methyl-2-oxobutanoate hydroxymethyltransferase (281 aa).

Mg(2+) is bound by residues Asp-49 and Asp-88. 3-methyl-2-oxobutanoate-binding positions include 49–50, Asp-88, and Lys-118; that span reads DS. Glu-120 serves as a coordination point for Mg(2+). Glu-186 serves as the catalytic Proton acceptor.

The protein belongs to the PanB family. In terms of assembly, homodecamer; pentamer of dimers. Mg(2+) serves as cofactor.

It is found in the cytoplasm. The enzyme catalyses 3-methyl-2-oxobutanoate + (6R)-5,10-methylene-5,6,7,8-tetrahydrofolate + H2O = 2-dehydropantoate + (6S)-5,6,7,8-tetrahydrofolate. The protein operates within cofactor biosynthesis; (R)-pantothenate biosynthesis; (R)-pantoate from 3-methyl-2-oxobutanoate: step 1/2. Functionally, catalyzes the reversible reaction in which hydroxymethyl group from 5,10-methylenetetrahydrofolate is transferred onto alpha-ketoisovalerate to form ketopantoate. The protein is 3-methyl-2-oxobutanoate hydroxymethyltransferase of Chelativorans sp. (strain BNC1).